Consider the following 61-residue polypeptide: Small ribosomal subunit protein uS14 (61 aa).

4 residues coordinate Zn(2+): Cys-24, Cys-27, Cys-40, and Cys-43.

It belongs to the universal ribosomal protein uS14 family. Zinc-binding uS14 subfamily. As to quaternary structure, part of the 30S ribosomal subunit. Contacts proteins S3 and S10. Zn(2+) serves as cofactor.

Functionally, binds 16S rRNA, required for the assembly of 30S particles and may also be responsible for determining the conformation of the 16S rRNA at the A site. The sequence is that of Small ribosomal subunit protein uS14 from Mesoplasma florum (strain ATCC 33453 / NBRC 100688 / NCTC 11704 / L1) (Acholeplasma florum).